The following is a 134-amino-acid chain: MFADIAVQHWAFAIYVIAAICLCLVMIGLAALLGGRAHGRAKNTPFESGVDSVGNARLRFSAKFYLVAMFFVIFDVEALYLFAWSVSVRESGWVGFIEAAIFIGLLLVGLLYLWRIGALDSAPKKRALTDKKPD.

3 helical membrane passes run 12–32 (FAIYVIAAICLCLVMIGLAAL), 64–84 (FYLVAMFFVIFDVEALYLFAW), and 93–113 (WVGFIEAAIFIGLLLVGLLYL).

It belongs to the complex I subunit 3 family. As to quaternary structure, NDH-1 is composed of 14 different subunits. Subunits NuoA, H, J, K, L, M, N constitute the membrane sector of the complex.

It is found in the cell inner membrane. The enzyme catalyses a quinone + NADH + 5 H(+)(in) = a quinol + NAD(+) + 4 H(+)(out). In terms of biological role, NDH-1 shuttles electrons from NADH, via FMN and iron-sulfur (Fe-S) centers, to quinones in the respiratory chain. The immediate electron acceptor for the enzyme in this species is believed to be ubiquinone. Couples the redox reaction to proton translocation (for every two electrons transferred, four hydrogen ions are translocated across the cytoplasmic membrane), and thus conserves the redox energy in a proton gradient. The sequence is that of NADH-quinone oxidoreductase subunit A from Aeromonas salmonicida (strain A449).